We begin with the raw amino-acid sequence, 448 residues long: Proteases secretion protein PrtE (448 aa).

Residues 1–30 (MTGMDITTQDELNEAAMRDRASRDEERALR) lie on the Cytoplasmic side of the membrane. The helical transmembrane segment at 31–50 (LGWWLVLAGFGGFLLWALLA) threads the bilayer. Over 51 to 448 (PLDKGVAVQG…DRMHLALTEE (398 aa)) the chain is Periplasmic.

This sequence belongs to the membrane fusion protein (MFP) (TC 8.A.1) family.

Its subcellular location is the cell inner membrane. Involved in the secretion of proteases A, B, C and G. This chain is Proteases secretion protein PrtE (prtE), found in Dickeya chrysanthemi (Pectobacterium chrysanthemi).